The sequence spans 298 residues: Protein ABIL1 (298 aa).

The protein belongs to the ABI family. As to quaternary structure, binds SCAR2. In terms of tissue distribution, expressed in seedlings, roots, hypocotyls, cotyledons, leaves, stems, and flowers.

It localises to the cytoplasm. Its subcellular location is the cytoskeleton. Involved in regulation of actin and microtubule organization. Part of a WAVE complex that activates the Arp2/3 complex. The chain is Protein ABIL1 (ABIL1) from Arabidopsis thaliana (Mouse-ear cress).